The chain runs to 699 residues: Elongation factor G (699 aa).

One can recognise a tr-type G domain in the interval 8-283 (EHIRNIGICA…AVVDFLPSPI (276 aa)). GTP-binding positions include 17–24 (AHIDAGKT), 81–85 (DTPGH), and 135–138 (NKMD).

It belongs to the TRAFAC class translation factor GTPase superfamily. Classic translation factor GTPase family. EF-G/EF-2 subfamily.

It is found in the cytoplasm. In terms of biological role, catalyzes the GTP-dependent ribosomal translocation step during translation elongation. During this step, the ribosome changes from the pre-translocational (PRE) to the post-translocational (POST) state as the newly formed A-site-bound peptidyl-tRNA and P-site-bound deacylated tRNA move to the P and E sites, respectively. Catalyzes the coordinated movement of the two tRNA molecules, the mRNA and conformational changes in the ribosome. This is Elongation factor G from Rickettsia parkeri.